The primary structure comprises 164 residues: ATP synthase subunit b (164 aa).

The helical transmembrane segment at 8-28 (IGLFFWQTIVFLILLFLMAKF) threads the bilayer.

It belongs to the ATPase B chain family. As to quaternary structure, F-type ATPases have 2 components, F(1) - the catalytic core - and F(0) - the membrane proton channel. F(1) has five subunits: alpha(3), beta(3), gamma(1), delta(1), epsilon(1). F(0) has three main subunits: a(1), b(2) and c(10-14). The alpha and beta chains form an alternating ring which encloses part of the gamma chain. F(1) is attached to F(0) by a central stalk formed by the gamma and epsilon chains, while a peripheral stalk is formed by the delta and b chains.

It is found in the cell membrane. Its function is as follows. F(1)F(0) ATP synthase produces ATP from ADP in the presence of a proton or sodium gradient. F-type ATPases consist of two structural domains, F(1) containing the extramembraneous catalytic core and F(0) containing the membrane proton channel, linked together by a central stalk and a peripheral stalk. During catalysis, ATP synthesis in the catalytic domain of F(1) is coupled via a rotary mechanism of the central stalk subunits to proton translocation. Component of the F(0) channel, it forms part of the peripheral stalk, linking F(1) to F(0). This chain is ATP synthase subunit b, found in Christiangramia forsetii (strain DSM 17595 / CGMCC 1.15422 / KT0803) (Gramella forsetii).